Consider the following 296-residue polypeptide: Co-chaperone protein DjlA (296 aa).

Residues 1 to 15 lie on the Periplasmic side of the membrane; it reads MNLRDFFVITTWWGK. Residues 16–39 form a helical membrane-spanning segment; the sequence is ILGAFFGYLTAGPVGALFGILVGN. Residues 40–296 lie on the Cytoplasmic side of the membrane; that stretch reads FFDRGLVSYY…YELICETKGW (257 aa). Positions 200–225 are disordered; it reads QHYHNQQEYKHTSSSQGQQGYKPQSP. The span at 211-221 shows a compositional bias: polar residues; it reads TSSSQGQQGYK. The 66-residue stretch at 231 to 296 folds into the J domain; the sequence is HAFALLEVSP…YELICETKGW (66 aa).

Homodimer.

The protein localises to the cell inner membrane. Its function is as follows. Regulatory DnaK co-chaperone. Direct interaction between DnaK and DjlA is needed for the induction of the wcaABCDE operon, involved in the synthesis of a colanic acid polysaccharide capsule, possibly through activation of the RcsB/RcsC phosphotransfer signaling pathway. The colanic acid capsule may help the bacterium survive conditions outside the host. The polypeptide is Co-chaperone protein DjlA (Legionella pneumophila subsp. pneumophila (strain Philadelphia 1 / ATCC 33152 / DSM 7513)).